The primary structure comprises 4684 residues: Plectin (4684 aa).

Residues 1–1470 (MVAGMLMPRD…SELTTLTSQY (1470 aa)) are globular 1. 2 positions are modified to phosphoserine: Phe20 and Arg21. Val26 carries the phosphotyrosine modification. Position 42 is a phosphoserine (Gly42). The residue at position 113 (Thr113) is a Phosphothreonine. Residues Ser125 and Ser149 each carry the phosphoserine modification. The interval 144-179 (ELEEVSPETPVVPATTQRTLARPGPEPAPATDERDR) is disordered. An actin-binding region spans residues 175–400 (DERDRVQKKT…YVSSLYDAMP (226 aa)). Calponin-homology (CH) domains are found at residues 179-282 (RVQK…LHFQ) and 295-400 (MTAK…DAMP). One copy of the Spectrin 1 repeat lies at 645–710 (LQSVQRRPEL…SIEEFRAKIE (66 aa)). Residue Ser720 is modified to Phosphoserine. Spectrin repeat units follow at residues 740 to 824 (KLLN…REDH) and 837 to 930 (LQTQ…AVVQ). The SH3 domain maps to 941-998 (RGRLPLLAVCDYKQVEVTVHKGDECQLVGPAQPSHWKVLSSSGSEAAVPSVCFLVPPP). The segment at 964 to 4574 (ECQLVGPAQP…VGAYSKYLTC (3611 aa)) is required for interaction with intermediate filament proteins. A Phosphoserine modification is found at Ser1047. A Spectrin 4 repeat occupies 1315 to 1415 (RERVAQLLER…QRFAKQYINA (101 aa)). At Ser1435 the chain carries Phosphoserine. A coiled-coil region spans residues 1469 to 2756 (QYIKFISETL…AHSEEVTASQ (1288 aa)). The central fibrous rod domain stretch occupies residues 1471–2755 (IKFISETLRR…LAHSEEVTAS (1285 aa)). Residues 1618–1650 (RAEEAEAQKRQAQEEAERLRRQVQDESQRKRQA) are disordered. Ser1721 carries the phosphoserine modification. Lys1725 is modified (N6-acetyllysine). Ser1732 carries the phosphoserine modification. Disordered regions lie at residues 1794-1836 (LAQA…KQRQ), 2105-2139 (EAAR…EAAR), and 2217-2307 (RGEA…MEKH). Basic and acidic residues-rich tracts occupy residues 1798–1836 (EAEK…KQRQ), 2105–2128 (EAAR…ERVQ), and 2217–2258 (RGEA…KQSA). Low complexity predominate over residues 2259–2272 (EEQAQARAQAQAAA). A compositionally biased stretch (basic and acidic residues) spans 2273 to 2288 (EKLRKEAEQEAARRAQ). Residue Ser2631 is modified to Phosphoserine. Lys2636 carries the post-translational modification N6-acetyllysine. Disordered stretches follow at residues 2668 to 2707 (REEQ…RRKQ) and 2763 to 2784 (LPNG…HSFD). Residues 2679 to 2707 (EQERQRLVASMEEARRRQHEAEEGVRRKQ) show a composition bias toward basic and acidic residues. Positions 2756-4684 (QVAATKTLPN…SLGGPESAVA (1929 aa)) are globular 2. Residues Ser2782 and Ser2802 each carry the phosphoserine modification. 5 Plectin repeats span residues 2826–2863 (RHYL…PGTA), 2864–2901 (LILL…PELH), 2902–2939 (HKLL…REHG), 2940–2977 (IRLL…EEMN), and 2981–3015 (ADPS…PETG). Thr2886 carries the post-translational modification Phosphothreonine. The residue at position 3033 (Tyr3033) is a Phosphotyrosine. Position 3036 is a phosphoserine (Ser3036). N6-acetyllysine is present on residues Lys3053 and Lys3091. Plectin repeat units follow at residues 3116-3153 (SLVP…VDTV), 3154-3191 (RRAL…SDMA), 3192-3229 (VALL…PEFH), 3230-3267 (EKLL…REQG), 3268-3305 (LRLL…EETS), and 3306-3343 (RALS…QLTG). Residues 3310 to 3331 (APRADAKAYSDPSTGEPATYGE) form a disordered region. Tyr3362 is subject to Phosphotyrosine. Position 3420 is an N6-acetyllysine (Lys3420). Plectin repeat units follow at residues 3485–3522 (RTLL…ATTA), 3523–3560 (ALLL…PELH), 3561–3598 (EQLL…RQHG), 3599–3636 (IRLL…EEMN), and 3640–3674 (ADPS…PETG). Ser3580 carries the post-translational modification Phosphoserine. Thr3785 carries the phosphothreonine modification. 5 Plectin repeats span residues 3820–3857 (WCYL…AEVA), 3858–3895 (RLLL…PELH), 3896–3933 (DRLL…TEEA), 3934–3971 (LRLL…KDTH), and 3975–4008 (SEPS…DGTG). Residues 3956–4293 (PLEVAYQRGY…ETGKEMSVYE (338 aa)) are required for interaction with type2 keratins, DES and VIM. Thr4030 is subject to Phosphothreonine. A Phosphoserine modification is found at Ser4054. Plectin repeat units follow at residues 4063–4100 (QKFL…PGTA), 4101–4138 (FELL…PEFK), 4139–4176 (DKLL…KDHG), 4177–4214 (IRLL…EEMN), 4218–4252 (TDPS…PQTG), 4265–4305 (RKTS…HQTY), and 4319–4356 (TISS…RSAL). The segment at 4250–4300 (QTGLCLLPLKEKKRERKTSSKSSVRKRRVVIVDPETGKEMSVYEAYRKGLI) is binding to intermediate filaments. Residues Ser4382, Ser4384, Ser4385, Ser4386, Ser4389, Ser4390, Ser4391, and Ser4392 each carry the phosphoserine modification. Tyr4393 is modified (phosphotyrosine). 3 positions are modified to phosphoserine: Ser4396, Ser4400, and Ser4406. 5 Plectin repeats span residues 4408 to 4445 (SDPT…NITG), 4446 to 4483 (QRLL…KIMV), 4484 to 4521 (DRIN…YEAG), 4522 to 4559 (QRFL…ARTA), and 4560 to 4597 (QKLR…EGTG). At Thr4411 the chain carries Phosphothreonine. The tract at residues 4505-4574 (MSAAQALKKG…VGAYSKYLTC (70 aa)) is required for efficient interaction with KRT5 and KRT14 heterodimers. Thr4539 carries the post-translational modification Phosphothreonine; by CDK1. A phosphoserine mark is found at Ser4607 and Ser4613. The span at 4611 to 4678 (YYSPYSVSGS…ASGSSASLGG (68 aa)) shows a compositional bias: low complexity. Residues 4611–4684 (YYSPYSVSGS…SLGGPESAVA (74 aa)) form a disordered region. Phosphotyrosine is present on Tyr4615. 3 positions are modified to phosphoserine: Ser4616, Ser4618, and Ser4622. Thr4623 carries the post-translational modification Phosphothreonine. Residues 4625–4640 (GSRTGSRTGSRAGSRR) form a 4 X 4 AA tandem repeats of G-S-R-X region. Ser4626 carries the post-translational modification Phosphoserine. 2 positions are modified to omega-N-methylarginine: Arg4627 and Arg4640. Phosphoserine is present on residues Ser4642, Ser4672, and Ser4675.

This sequence belongs to the plakin or cytolinker family. Homodimer or homotetramer. Interacts (via actin-binding domain) with SYNE3. Interacts (via calponin-homology (CH) 1 domain) with VIM (via rod region). Interacts (via N-terminus) with DST isoform 2 (via N-terminus). Interacts with FER. Interacts with TOR1A. Interacts with ANK3. Identified in complexes that contain VIM, EZR, AHNAK, BFSP1, BFSP2, ANK2, PLEC, PRX and spectrin. Interacts with COL17A1. In terms of assembly, interacts with KRT14, heterodimers consisting of KRT8 and KRT18, heterodimers consisting of KRT5 and KRT14, heterodimers consisting of KRT14 and KRT15, and heterodimers consisting of KRT1 and KRT10. Interacts with DES and VIM. Phosphorylated by CDK1; regulates dissociation from intermediate filaments during mitosis. In terms of tissue distribution, widely expressed with highest levels in muscle, heart, placenta and spinal cord.

The protein localises to the cytoplasm. The protein resides in the cytoskeleton. Its subcellular location is the cell junction. It is found in the hemidesmosome. It localises to the cell projection. The protein localises to the podosome. Functionally, interlinks intermediate filaments with microtubules and microfilaments and anchors intermediate filaments to desmosomes or hemidesmosomes. Could also bind muscle proteins such as actin to membrane complexes in muscle. May be involved not only in the filaments network, but also in the regulation of their dynamics. Structural component of muscle. Isoform 9 plays a major role in the maintenance of myofiber integrity. This Homo sapiens (Human) protein is Plectin (PLEC).